The chain runs to 330 residues: Probable pectinesterase 55 (330 aa).

A signal peptide spans 1 to 24 (MGTHRIILGLAALCCFCLPHLIEA). 2 N-linked (GlcNAc...) asparagine glycosylation sites follow: Asn38 and Asn52. The Proton donor role is filled by Asp161. Asp182 acts as the Nucleophile in catalysis. Positions 243 and 245 each coordinate substrate. Asn257 and Asn292 each carry an N-linked (GlcNAc...) asparagine glycan.

It belongs to the pectinesterase family.

The protein localises to the secreted. It is found in the cell wall. The catalysed reaction is [(1-&gt;4)-alpha-D-galacturonosyl methyl ester](n) + n H2O = [(1-&gt;4)-alpha-D-galacturonosyl](n) + n methanol + n H(+). The protein operates within glycan metabolism; pectin degradation; 2-dehydro-3-deoxy-D-gluconate from pectin: step 1/5. Its function is as follows. Acts in the modification of cell walls via demethylesterification of cell wall pectin. This chain is Probable pectinesterase 55 (PME55), found in Arabidopsis thaliana (Mouse-ear cress).